We begin with the raw amino-acid sequence, 215 residues long: Probable transaldolase (215 aa).

Residue K83 is the Schiff-base intermediate with substrate of the active site.

Belongs to the transaldolase family. Type 3B subfamily.

The protein resides in the cytoplasm. The enzyme catalyses D-sedoheptulose 7-phosphate + D-glyceraldehyde 3-phosphate = D-erythrose 4-phosphate + beta-D-fructose 6-phosphate. It functions in the pathway carbohydrate degradation; pentose phosphate pathway; D-glyceraldehyde 3-phosphate and beta-D-fructose 6-phosphate from D-ribose 5-phosphate and D-xylulose 5-phosphate (non-oxidative stage): step 2/3. Functionally, transaldolase is important for the balance of metabolites in the pentose-phosphate pathway. The sequence is that of Probable transaldolase from Clostridium perfringens (strain 13 / Type A).